The sequence spans 181 residues: Histone deacetylase complex subunit SAP30L-B (181 aa).

Intrachain disulfides connect Cys26/Cys27 and Cys35/Cys71. The Atypical zinc-finger motif lies at 26–74; the sequence is CCLIDGGERCPRPAGNASFSKRVQKSISQKKLKLDIDKSVRHLYICDFH. Residues 82–103 are disordered; that stretch reads RNKRKRKTSDDGGDSPEHETDV. Residues 83 to 88 carry the Nuclear localization signal (NLS) motif; it reads NKRKRK. The segment at 85-87 is important for DNA and phosphoinositide binding; sequence RKR.

Belongs to the SAP30 family. In terms of assembly, interacts with components of the histone deacetylase complex sin3a, hdac1 and hdac2. Binds histones and nucleosomes.

The protein localises to the nucleus. Its subcellular location is the nucleolus. In terms of biological role, functions as a transcription repressor, probably via its interaction with histone deacetylase complexes. Involved in the functional recruitment of the class 1 Sin3-histone deacetylase complex (HDAC) to the nucleolus. Binds DNA, apparently without sequence-specificity, and bends bound double-stranded DNA. Binds phosphoinositol phosphates (phosphoinositol 3-phosphate, phosphoinositol 4-phosphate and phosphoinositol 5-phosphate) via the same basic sequence motif that mediates DNA binding and nuclear import. The protein is Histone deacetylase complex subunit SAP30L-B (sap30l-b) of Xenopus laevis (African clawed frog).